The following is a 351-amino-acid chain: Histidinol-phosphate aminotransferase (351 aa).

At K221 the chain carries N6-(pyridoxal phosphate)lysine.

The protein belongs to the class-II pyridoxal-phosphate-dependent aminotransferase family. Histidinol-phosphate aminotransferase subfamily. In terms of assembly, homodimer. The cofactor is pyridoxal 5'-phosphate.

It catalyses the reaction L-histidinol phosphate + 2-oxoglutarate = 3-(imidazol-4-yl)-2-oxopropyl phosphate + L-glutamate. The protein operates within amino-acid biosynthesis; L-histidine biosynthesis; L-histidine from 5-phospho-alpha-D-ribose 1-diphosphate: step 7/9. This is Histidinol-phosphate aminotransferase from Staphylococcus haemolyticus (strain JCSC1435).